The sequence spans 276 residues: MNFKKLLGVALVSALALTACKDEKAQAPATTAKTENKAPLKVGVMTGPEAQMTEVAVKIAKEKYGLDVELVQFTEYTQPNAALHSKDLDANAFQTVPYLEQEVKDRGYKLAIIGNTLVWPIAAYSKKIKNISELKDGATVAIPNNASNTARALLLLQAHGLLKLKDPKNVFATENDIIENPKNIKIVQADTSLLTRMLDDVELAVINNTYAGQAGLSPDKDGIIVESKDSPYVNLVVSREDNKDDPRLQTFVKSFQTEEVFQEALKLFNGGVVKGW.

The first 19 residues, Met-1–Ala-19, serve as a signal peptide directing secretion. Cys-20 carries N-palmitoyl cysteine lipidation. A lipid anchor (S-diacylglycerol cysteine) is attached at Cys-20.

Belongs to the NlpA lipoprotein family.

The protein resides in the cell outer membrane. This Mannheimia haemolytica (Pasteurella haemolytica) protein is Outer membrane lipoprotein 2 (plpB).